The chain runs to 365 residues: Quinolone epoxide rearrangement protein asqO (365 aa).

This sequence belongs to the quinolone epoxide rearrangement protein penF family.

It catalyses the reaction (1'E,3'E)-5-(3,3-dimethyloxiran-2-yl)-3-methylhexa-1,3-dienyl-quinolinone B = aspoquinolone A. The catalysed reaction is (1'E,3'E)-5-(3,3-dimethyloxiran-2-yl)-3-methylhexa-1,3-dienyl-quinolinone B = aspoquinolone B. The protein operates within secondary metabolite biosynthesis. Its pathway is alkaloid biosynthesis. It functions in the pathway mycotoxin biosynthesis. Its function is as follows. Quinolone epoxide rearrangement protein; part of the gene cluster that mediates the biosynthesis of the aspoquinolone mycotoxins. Within the pathway, asqO catalyzes an enzymatic 3-exo-tet cyclization to yield the cyclopropyl-THF ring system in aspoquinolone. The first step of the pathway is catalyzed by the nonribosomal peptide synthetase asqK that condenses anthranilic acid and O-methyl-L-tyrosine to produce 4'-methoxycyclopeptin. 4'-methoxycyclopeptin is then converted to 4'-methoxydehydrocyclopeptin by the ketoglutarate-dependent dioxygenase asqJ. AsqJ also converts its first product 4'-methoxydehydrocyclopeptin to 4'-methoxycyclopenin. The following conversion of 4'-methoxycyclopenin into 4'-methoxyviridicatin is catalyzed by the cyclopenase asqI. 4'-methoxyviridicatin is the precursor of quinolone natural products, and is further converted to quinolinone B. The prenyltransferase asqH1 then catalyzes the canonical Friedel-Crafts alkylation of quinolinone B with dimethylallyl cation to yield dimethylallyl quinolone, which is subjected to FAD-dependent dehydrogenation by the FAD-linked oxidoreductase asqF to yield conjugated aryl diene. The delta(3') double bond then serves as the site of the second alkylation with DMAPP catalyzed by the prenyltransferase asqH2 to yield a carbenium ion intermediate, which can be attacked by H(2)O to yield a styrenyl quinolone containing a C3'-hydroxyprenyl chain. The FAD-dependent monooxygenase asqG performs epoxidation of the terminal C7'-C8' olefin. Finally, after dehydratation of the epoxide at C3 by asqC, the quinolone epoxide rearrangement protein asqO catalyzes an enzymatic 3-exo-tet cyclization to yield the cyclopropyl-THF ring system in aspoquinolone. In Emericella nidulans (strain FGSC A4 / ATCC 38163 / CBS 112.46 / NRRL 194 / M139) (Aspergillus nidulans), this protein is Quinolone epoxide rearrangement protein asqO.